Reading from the N-terminus, the 678-residue chain is MTKNLLVELGLEELPAYVVTPSEKQLGEKMAAFLKENRLSFEAIQTFSTPRRLAVRVTGLSDKQSDLTEDFKGPAKKIALDSDGNFTKAAQGFVRGKGLTVEDIEFREIKGEEYVYVTKEEVGQSVEAIVPGVVDVLKSLTFPVSMHWAGNSFEYIRPVHTLTVLLDEQEFDLDFLDIKGSRVSRGHRFLGKETKIQSALSYEEDLRKQFVIADPCEREQMIVDQIKEIEAKHGVRIEIDADLLNEVLNLVEYPTAFMGSFDAKYLEVPEEVLVTSMKEHQRYFVVRDQDGKLLPNFISVRNGNAERLKNVIKGNEKVLVARLEDGEFFWREDQKLVISDLVEKLNNVTFHEKIGSLREHMIRTGQITVLLAEKAGLSVDETVDLARAAAIYKFDLLTGMVGEFDELQGIMGEKYTLLAGETPAVAAAIREHYMPTSAEGELPESKVGAVLAIADKLDTILSFFSVGLIPSGSNDPYALRRATQGVVRILDAFGWHIAMDELIDSLYALKFDSLTYENKAEVMDFIKARVDKMMGSTPKDIKEAVLAGSNFVVADMLEAASALVEVSKEEDFKPSVESLSRAFNLAEKAEGVATVDSALFENDQEKALAEAVETLILSGPASQQLKQLFALSPVIDAFFENTMVMAEDQAVRQNRLAILSQLTKKAAKFACFNQINTK.

The protein belongs to the class-II aminoacyl-tRNA synthetase family. Tetramer of two alpha and two beta subunits.

The protein localises to the cytoplasm. It catalyses the reaction tRNA(Gly) + glycine + ATP = glycyl-tRNA(Gly) + AMP + diphosphate. The chain is Glycine--tRNA ligase beta subunit from Streptococcus pneumoniae (strain Hungary19A-6).